The sequence spans 395 residues: Indoleacetate--lysine synthetase (395 aa).

Belongs to the ATP-dependent AMP-binding enzyme family.

The catalysed reaction is (indol-3-yl)acetate + L-lysine + ATP = N(6)-[(indole-3-yl)acetyl]-L-lysine + ADP + phosphate + H(+). Its function is as follows. Conversion of IAA to IAA-lysine. This Pseudomonas savastanoi (Pseudomonas syringae pv. savastanoi) protein is Indoleacetate--lysine synthetase (iaaL).